We begin with the raw amino-acid sequence, 246 residues long: Dihydroorotate dehydrogenase B (NAD(+)), electron transfer subunit (246 aa).

One can recognise an FAD-binding FR-type domain in the interval 3–97 (EKYTVEKVYE…TGPLGNGFNV (95 aa)). FAD contacts are provided by residues 50 to 53 (RPIS) and 72 to 73 (GT). Cysteine 211, cysteine 216, cysteine 219, and cysteine 231 together coordinate [2Fe-2S] cluster.

It belongs to the PyrK family. As to quaternary structure, heterotetramer of 2 PyrK and 2 PyrD type B subunits. The cofactor is [2Fe-2S] cluster. FAD is required as a cofactor.

The protein operates within pyrimidine metabolism; UMP biosynthesis via de novo pathway; orotate from (S)-dihydroorotate (NAD(+) route): step 1/1. Responsible for channeling the electrons from the oxidation of dihydroorotate from the FMN redox center in the PyrD type B subunit to the ultimate electron acceptor NAD(+). This Clostridium acetobutylicum (strain ATCC 824 / DSM 792 / JCM 1419 / IAM 19013 / LMG 5710 / NBRC 13948 / NRRL B-527 / VKM B-1787 / 2291 / W) protein is Dihydroorotate dehydrogenase B (NAD(+)), electron transfer subunit.